Here is a 770-residue protein sequence, read N- to C-terminus: Transducin-like enhancer protein 1 (770 aa).

A q domain region spans residues 1–131 (MFPQSRHPTP…IIGQQQLQAQ (131 aa)). Disordered stretches follow at residues 128–157 (LQAQHLSHGHGPPVPLTPHPSGLQPPGIPP) and 176–348 (HLAI…PAID). A GP domain region spans residues 132 to 199 (HLSHGHGPPV…HHRDREPGTS (68 aa)). 2 stretches are compositionally biased toward basic and acidic residues: residues 178-196 (AIKDDKKHHDAEHHRDREP) and 209-246 (RGTDKRRNGPEFSNDIKKRKVDDKDSSHYDSDGDKSDD). Residues 200–268 (NSLLVPDSLR…SPRASPAHSP (69 aa)) are ccN domain. A Nuclear localization signal motif is present at residues 225 to 228 (KKRK). Serine 239 carries the phosphoserine modification. Positions 257–266 (PSSPRASPAH) are enriched in low complexity. Serine 259, serine 263, and serine 267 each carry phosphoserine; by CDK1. Over residues 267–283 (SPRENGIDKNRLLKKDA) the composition is skewed to basic and acidic residues. Residues 269 to 450 (RENGIDKNRL…GGKPAYSFHV (182 aa)) form an SP domain region. Low complexity predominate over residues 284 to 298 (SSSPASTASSASSTS). Residue serine 286 is modified to Phosphoserine. Over residues 300 to 310 (KSKEMSLHEKA) the composition is skewed to basic and acidic residues. 6 WD repeats span residues 470 to 501 (GIPRHARQINTLNHGEVVCAVTISNPTRHVYT), 528 to 558 (NRDNYIRSCKLLPDGCTLIVGGEASTLSIWD), 572 to 602 (SSAPACYALAISPDSKVCFSCCSDGNIAVWD), 614 to 644 (GHTDGASCIDISNDGTKLWTGGLDNTVRSWD), 696 to 726 (LHESCVLSLKFAYCGKWFVSTGKDNLLNAWR), and 737 to 767 (KESSSVLSCDISVDDKYIVTGSGDKKATVYE).

It belongs to the WD repeat Groucho/TLE family. As to quaternary structure, homooligomer and heterooligomer with other family members. Binds RUNX1, RUNX3, FOXA2, KDM6A, UTY, histone H3, HESX1, ESRRG and the NF-kappa-B subunit RELA. Interacts with HES1 (via WRPW motif). Binds TCF7, LEF1, TCF7L1 and TCF7L2. Interacts with SIX3. Interacts with EFNB1. Interacts with TLE4. Interacts with FOXG1/BF-1; the interaction is inhibited by TLE6/GRG6. Post-translationally, phosphorylated, probably by CDK1. The degree of phosphorylation varies throughout the cell cycle, and is highest at the G2/M transition. Becomes hyperphosphorylated in response to cell differentiation and interaction with HES1 or RUNX1. In terms of processing, ubiquitinated by XIAP/BIRC4. In all tissues examined, mostly in brain, liver and muscle.

The protein resides in the nucleus. Functionally, transcriptional corepressor that binds to a number of transcription factors. Inhibits NF-kappa-B-regulated gene expression. Inhibits the transcriptional activation mediated by FOXA2, and by CTNNB1 and TCF family members in Wnt signaling. Enhances FOXG1/BF-1- and HES1-mediated transcriptional repression. The effects of full-length TLE family members may be modulated by association with dominant-negative AES. Unusual function as coactivator for ESRRG. This Homo sapiens (Human) protein is Transducin-like enhancer protein 1 (TLE1).